A 658-amino-acid chain; its full sequence is Heat shock protein homolog SSE1 (658 aa).

Residues 614–627 are compositionally biased toward basic and acidic residues; that stretch reads KRKEEERKSKKENA. Positions 614-658 are disordered; that stretch reads KRKEEERKSKKENAQEGTSSKPESKEESEAKEDNDEESDVASIDE. Over residues 642–658 the composition is skewed to acidic residues; that stretch reads EAKEDNDEESDVASIDE.

It belongs to the heat shock protein 70 family.

The protein localises to the cytoplasm. Functionally, required for normal growth at various temperatures. The chain is Heat shock protein homolog SSE1 (SSE1) from Encephalitozoon cuniculi (strain GB-M1) (Microsporidian parasite).